A 545-amino-acid chain; its full sequence is ATP synthase subunit alpha (545 aa).

Position 172-179 (172-179) interacts with ATP; the sequence is GDRKTGKT.

It belongs to the ATPase alpha/beta chains family. As to quaternary structure, F-type ATPases have 2 components, CF(1) - the catalytic core - and CF(0) - the membrane proton channel. CF(1) has five subunits: alpha(3), beta(3), gamma(1), delta(1), epsilon(1). CF(0) has three main subunits: a(1), b(2) and c(9-12). The alpha and beta chains form an alternating ring which encloses part of the gamma chain. CF(1) is attached to CF(0) by a central stalk formed by the gamma and epsilon chains, while a peripheral stalk is formed by the delta and b chains.

It localises to the cell membrane. It catalyses the reaction ATP + H2O + 4 H(+)(in) = ADP + phosphate + 5 H(+)(out). Produces ATP from ADP in the presence of a proton gradient across the membrane. The alpha chain is a regulatory subunit. The polypeptide is ATP synthase subunit alpha (Corynebacterium urealyticum (strain ATCC 43042 / DSM 7109)).